Here is a 196-residue protein sequence, read N- to C-terminus: MFCEKAIELIRELQRASDGQLPAFNEDGIRQILEEMKALYEQNQADVNEAKTEGRSDLIPTIKFRHCCLLRNRRCIVAYLYDRLLRIRALRWEYGSVLPSALRFHMSTEEMDWFNQYKRSLATYMRSLGGEEGLDITQDMKPPKSLYIEVRCLRDYGEFEIDDGTTILLKKNSQHFLPRWKCEQLIRQGVLEHVLS.

It belongs to the GINS1/PSF1 family. Component of the GINS complex which is a heterotetramer of gins1/psf1, gins2/psf2, gins3/psf3 and gins4/sld5. Component of the CMG helicase complex, composed of the mcm2-7 complex, the GINS complex and cdc45.

The protein resides in the nucleus. It localises to the chromosome. Required for correct functioning of the GINS complex, a complex that plays an essential role in the initiation of DNA replication, and progression of DNA replication forks. GINS complex is a core component of CDC45-MCM-GINS (CMG) helicase, the molecular machine that unwinds template DNA during replication, and around which the replisome is built. This chain is DNA replication complex GINS protein PSF1, found in Xenopus laevis (African clawed frog).